We begin with the raw amino-acid sequence, 841 residues long: MSDNEIKNEAPKKLSLQRRTKTTVADGKVQVEVRKSRKIDTAAVKKAQEEAALKAKQEAEAKAQAEKTAAEQAKAEAEAAKKAEGAKVEATKKSAPAVPVMPNSKPKAAAPKAEQPKQEKALDPEKEAKKKEEAELRRKQEELARQKAEMEAKRAAENARRLAEIAREEAAENGEEFEDDRFTSSYAREADRDNDRRSEANRGRGKGGVNKAKKGDREDKNERNADRRNQKDVKGKGKNAKKGSALQQAFTKPVQVNKADVVIGETITVAELANKMAVKATEIIKTMMKMGEMVTINQVIDQETAQLVAEEMGHKVILRNENELEDAVMEDRDVDAEKVTRAPVVTIMGHVDHGKTSLLDYIRKAKVAAGEAGGITQHIGAYHVETEDGKMITFLDTPGHAAFTSMRARGAKATDIVVLVVAADDGVMPQTIEAIQHARAAGAPIVVAVNKIDKPEANPDRVEQELLQHEVVSEKFGGDVQFVSVSAKKGLGIDDLLEAILLQSEVLELTAVKEGMASGVVIESYLDKGRGPVATILVQSGTLNKGDIVLCGFEYGRVRAMRDENGKEVDSAGPSIPVEVLGLSGVPAAGDEATVVRDEKKAREVALFRQGKFREVKLARQQKAKLENMFSNMTAGDVAELNVIVKADVQGSVEAICQSLAELSTDEVKVKVVGSGVGGITETDATLAAASNAIMVGFNVRADASARRVIEAENIDLRYYSIIYELLNEIKAAMSGMLQPEFKQEIIGLAEVRDVFRHPKFGAIAGCMVTEGVVKRNNPIRVLRDNVVIFEGELESLRRFKDDVSEVRNGMECGIGVKNYNDVKVGDQIEVFEVVEVKRSI.

Basic and acidic residues-rich tracts occupy residues 1 to 12 (MSDNEIKNEAPK), 50 to 92 (EAAL…EATK), 114 to 170 (EQPK…REEA), 188 to 202 (READ…EANR), and 213 to 235 (KKGD…DVKG). Disordered regions lie at residues 1–24 (MSDN…KTTV) and 50–246 (EAAL…GSAL). The tr-type G domain maps to 340–510 (TRAPVVTIMG…LLQSEVLELT (171 aa)). The G1 stretch occupies residues 349–356 (GHVDHGKT). Residue 349–356 (GHVDHGKT) participates in GTP binding. The tract at residues 374-378 (GITQH) is G2. Residues 396–399 (DTPG) form a G3 region. GTP-binding positions include 396–400 (DTPGH) and 450–453 (NKID). A G4 region spans residues 450 to 453 (NKID). The segment at 486–488 (SAK) is G5.

This sequence belongs to the TRAFAC class translation factor GTPase superfamily. Classic translation factor GTPase family. IF-2 subfamily.

It is found in the cytoplasm. Functionally, one of the essential components for the initiation of protein synthesis. Protects formylmethionyl-tRNA from spontaneous hydrolysis and promotes its binding to the 30S ribosomal subunits. Also involved in the hydrolysis of GTP during the formation of the 70S ribosomal complex. In Actinobacillus pleuropneumoniae serotype 3 (strain JL03), this protein is Translation initiation factor IF-2.